A 212-amino-acid chain; its full sequence is Methylthioribulose-1-phosphate dehydratase (212 aa).

Residues H97 and H99 each coordinate Zn(2+).

This sequence belongs to the aldolase class II family. MtnB subfamily. As to quaternary structure, homotetramer. Requires Zn(2+) as cofactor.

It carries out the reaction 5-(methylsulfanyl)-D-ribulose 1-phosphate = 5-methylsulfanyl-2,3-dioxopentyl phosphate + H2O. The protein operates within amino-acid biosynthesis; L-methionine biosynthesis via salvage pathway; L-methionine from S-methyl-5-thio-alpha-D-ribose 1-phosphate: step 2/6. In terms of biological role, catalyzes the dehydration of methylthioribulose-1-phosphate (MTRu-1-P) into 2,3-diketo-5-methylthiopentyl-1-phosphate (DK-MTP-1-P). This chain is Methylthioribulose-1-phosphate dehydratase, found in Bacillus cereus (strain G9842).